Reading from the N-terminus, the 1051-residue chain is Carbamoyl phosphate synthase large chain (1051 aa).

A carboxyphosphate synthetic domain region spans residues 1 to 399 (MRETPKKVLV…SLQKAIRMLD (399 aa)). 12 residues coordinate ATP: Arg-127, Arg-167, Gly-173, Gly-174, Lys-206, Leu-208, Glu-213, Gly-239, Val-240, His-241, Gln-282, and Glu-296. The ATP-grasp 1 domain occupies 131–325 (RETMIENNLP…LAYVSAKLAL (195 aa)). Mg(2+)-binding residues include Gln-282, Glu-296, and Asn-298. Mn(2+) contacts are provided by Gln-282, Glu-296, and Asn-298. An oligomerization domain region spans residues 400–548 (IGEPGVVGGK…LTYNGTEDDI (149 aa)). The interval 549-930 (EFSQGNKLLI…LKSWLSSMPN (382 aa)) is carbamoyl phosphate synthetic domain. The ATP-grasp 2 domain occupies 673–863 (SKLLDKLGIS…LINESMKAIF (191 aa)). 10 residues coordinate ATP: Arg-709, Lys-748, Ile-750, Glu-755, Gly-779, Val-780, His-781, Ser-782, Gln-822, and Glu-834. Residues Gln-822, Glu-834, and Asn-836 each coordinate Mg(2+). Gln-822, Glu-834, and Asn-836 together coordinate Mn(2+). Residues 930–1051 (NRIPNKNGIA…FEISEYGGGI (122 aa)) form the MGS-like domain. An allosteric domain region spans residues 931–1051 (RIPNKNGIAL…FEISEYGGGI (121 aa)).

This sequence belongs to the CarB family. Composed of two chains; the small (or glutamine) chain promotes the hydrolysis of glutamine to ammonia, which is used by the large (or ammonia) chain to synthesize carbamoyl phosphate. Tetramer of heterodimers (alpha,beta)4. The cofactor is Mg(2+). Mn(2+) is required as a cofactor.

It carries out the reaction hydrogencarbonate + L-glutamine + 2 ATP + H2O = carbamoyl phosphate + L-glutamate + 2 ADP + phosphate + 2 H(+). It catalyses the reaction hydrogencarbonate + NH4(+) + 2 ATP = carbamoyl phosphate + 2 ADP + phosphate + 2 H(+). It functions in the pathway amino-acid biosynthesis; L-arginine biosynthesis; carbamoyl phosphate from bicarbonate: step 1/1. Its pathway is pyrimidine metabolism; UMP biosynthesis via de novo pathway; (S)-dihydroorotate from bicarbonate: step 1/3. Functionally, large subunit of the glutamine-dependent carbamoyl phosphate synthetase (CPSase). CPSase catalyzes the formation of carbamoyl phosphate from the ammonia moiety of glutamine, carbonate, and phosphate donated by ATP, constituting the first step of 2 biosynthetic pathways, one leading to arginine and/or urea and the other to pyrimidine nucleotides. The large subunit (synthetase) binds the substrates ammonia (free or transferred from glutamine from the small subunit), hydrogencarbonate and ATP and carries out an ATP-coupled ligase reaction, activating hydrogencarbonate by forming carboxy phosphate which reacts with ammonia to form carbamoyl phosphate. The chain is Carbamoyl phosphate synthase large chain from Saccharolobus solfataricus (strain ATCC 35092 / DSM 1617 / JCM 11322 / P2) (Sulfolobus solfataricus).